Reading from the N-terminus, the 808-residue chain is LisH domain-containing protein ARMC9 (808 aa).

The region spanning 7-39 (YEADLLGLVKEFLNFGEFQETLETFTKECKTKG) is the LisH domain. A coiled-coil region spans residues 196 to 230 (ITLYKESLHNNQELLQQLQQQLMETEHKARTYKKC). 3 disordered regions span residues 576–599 (FDESIESDDEEEEKDDEEDEDALE), 650–709 (PLQR…DYCV), and 742–808 (GMEK…SYRK). The segment covering 579–599 (SIESDDEEEEKDDEEDEDALE) has biased composition (acidic residues). 3 stretches are compositionally biased toward polar residues: residues 655-668 (VTPSTHRVMNTVRK), 677-709 (TNTFKTSQANMSVVSSRPPTRSGSRASTSDYCV), and 775-784 (IAPQFSQSGP). Low complexity predominate over residues 785–808 (QQTSYSSSAGSSTRSRQSTQSYRK).

It localises to the cytoplasm. The protein localises to the cytoskeleton. It is found in the cilium basal body. The protein resides in the cell projection. Its subcellular location is the cilium. It localises to the microtubule organizing center. The protein localises to the centrosome. It is found in the centriole. Its function is as follows. Involved in ciliogenesis. It is required for appropriate acetylation and polyglutamylation of ciliary microtubules, and regulation of cilium length. Acts as a positive regulator of hedgehog (Hh)signaling. The sequence is that of LisH domain-containing protein ARMC9 (armc9) from Xenopus tropicalis (Western clawed frog).